The sequence spans 750 residues: Photosystem I P700 chlorophyll a apoprotein A1 (750 aa).

8 helical membrane passes run 70–93 (VFSAHFGQLAIIFVWLSGMYFHGA), 156–179 (LYCTAIGALIFATLMLFAGWFHYH), 195–219 (LNHHLAGLLGLGSLAWAGHQVHVSL), 291–309 (TVHHHLAIAVLFLVAGHMY), 346–369 (WHAQLALNLAMLGSLTIIVAHHMY), 385–411 (LSLFTHHMWIGGFLVVGAAAHAAIFMV), 433–455 (AIISHLNWVCIFLGFHSFGLYIH), and 531–549 (FLVHHIHAFTIHVTVLILL). [4Fe-4S] cluster is bound by residues cysteine 573 and cysteine 582. The next 2 helical transmembrane spans lie at 589–610 (HVFLGLFWMYNSISIVIFHFSW) and 664–686 (LSAYGLLFLGAHFVWAFSLMFLF). A chlorophyll a'-binding site is contributed by histidine 675. 2 residues coordinate chlorophyll a: methionine 683 and tyrosine 691. A phylloquinone-binding site is contributed by tryptophan 692. The helical transmembrane segment at 724-744 (AVGVAHYLLGGIATTWAFFLA) threads the bilayer.

Belongs to the PsaA/PsaB family. In terms of assembly, the PsaA/B heterodimer binds the P700 chlorophyll special pair and subsequent electron acceptors. PSI consists of a core antenna complex that captures photons, and an electron transfer chain that converts photonic excitation into a charge separation. The eukaryotic PSI reaction center is composed of at least 11 subunits. The cofactor is P700 is a chlorophyll a/chlorophyll a' dimer, A0 is one or more chlorophyll a, A1 is one or both phylloquinones and FX is a shared 4Fe-4S iron-sulfur center..

It is found in the plastid. The protein resides in the chloroplast thylakoid membrane. It carries out the reaction reduced [plastocyanin] + hnu + oxidized [2Fe-2S]-[ferredoxin] = oxidized [plastocyanin] + reduced [2Fe-2S]-[ferredoxin]. Functionally, psaA and PsaB bind P700, the primary electron donor of photosystem I (PSI), as well as the electron acceptors A0, A1 and FX. PSI is a plastocyanin-ferredoxin oxidoreductase, converting photonic excitation into a charge separation, which transfers an electron from the donor P700 chlorophyll pair to the spectroscopically characterized acceptors A0, A1, FX, FA and FB in turn. Oxidized P700 is reduced on the lumenal side of the thylakoid membrane by plastocyanin. In Psilotum nudum (Whisk fern), this protein is Photosystem I P700 chlorophyll a apoprotein A1.